We begin with the raw amino-acid sequence, 66 residues long: Toxin BomPI (66 aa).

The LCN-type CS-alpha/beta domain occupies 2 to 64 (RDAYIAQPEN…VPIRIEGKCH (63 aa)). 4 cysteine pairs are disulfide-bonded: Cys-12-Cys-63, Cys-16-Cys-36, Cys-22-Cys-46, and Cys-26-Cys-48.

This sequence belongs to the long (4 C-C) scorpion toxin superfamily. Sodium channel inhibitor family. Alpha subfamily. As to expression, expressed by the venom gland.

It localises to the secreted. Alpha toxins bind voltage-independently at site-3 of sodium channels (Nav) and inhibit the inactivation of the activated channels, thereby blocking neuronal transmission. The sequence is that of Toxin BomPI from Buthus occitanus mardochei (Moroccan scorpion).